The chain runs to 122 residues: Large ribosomal subunit protein uL14 (122 aa).

It belongs to the universal ribosomal protein uL14 family. Part of the 50S ribosomal subunit. Forms a cluster with proteins L3 and L19. In the 70S ribosome, L14 and L19 interact and together make contacts with the 16S rRNA in bridges B5 and B8.

Its function is as follows. Binds to 23S rRNA. Forms part of two intersubunit bridges in the 70S ribosome. This is Large ribosomal subunit protein uL14 from Bradyrhizobium sp. (strain BTAi1 / ATCC BAA-1182).